The primary structure comprises 490 residues: MPTFSLVAYPRGCGAGSQEIMTEKKTVITRFAPSPTGYLHIGGARTALFNWLFARHHGGQFLLRIEDTDRERSTTPAIDAIFEGLQWLGLSWDAEPVFQASRAARHVEAVQELLDRGKAYHCYASQQELEEMREKARAEGRPIHYDGRWRDRDPAEAPAGVRPVVRFRSPNDGETIVRDHVMGDVRFPNEQLDDLILLRSDGTPTYNLSVVVDDHDMSITHIIRGDDHLTNAARQSQIYEALGWEVPEFAHVPLIHGPDGAKLSKRHGALGAEAYRDLGYLPEAMRNYLVRLGWSHGDDELFSTEQAIEWFNLESIGRSPARFDFAKLENLNGHYIREADDERLADETIALMTRNEGWKTDDEFRKKLIALMPGLKERAKTLVEIGKGAAFLLVHRPLTCDDKALQLLNPEARALLARLVSRLEARNDWILSEIETTVRAFAEEENLKLGKVAQPLRAAVTGSTVSPPIFDVLATLGRDEALGRIKDQAA.

The short motif at 33 to 43 (PSPTGYLHIGG) is the 'HIGH' region element. The 'KMSKS' region motif lies at 262 to 266 (KLSKR). ATP is bound at residue Lys265.

The protein belongs to the class-I aminoacyl-tRNA synthetase family. Glutamate--tRNA ligase type 1 subfamily. As to quaternary structure, monomer.

The protein localises to the cytoplasm. It carries out the reaction tRNA(Glu) + L-glutamate + ATP = L-glutamyl-tRNA(Glu) + AMP + diphosphate. Catalyzes the attachment of glutamate to tRNA(Glu) in a two-step reaction: glutamate is first activated by ATP to form Glu-AMP and then transferred to the acceptor end of tRNA(Glu). In Parvibaculum lavamentivorans (strain DS-1 / DSM 13023 / NCIMB 13966), this protein is Glutamate--tRNA ligase 2.